We begin with the raw amino-acid sequence, 282 residues long: Elongation factor Ts (282 aa).

The segment at 80-83 (TDFV) is involved in Mg(2+) ion dislocation from EF-Tu.

This sequence belongs to the EF-Ts family.

The protein resides in the cytoplasm. Functionally, associates with the EF-Tu.GDP complex and induces the exchange of GDP to GTP. It remains bound to the aminoacyl-tRNA.EF-Tu.GTP complex up to the GTP hydrolysis stage on the ribosome. This Pasteurella multocida (strain Pm70) protein is Elongation factor Ts (tsf).